Reading from the N-terminus, the 212-residue chain is Large ribosomal subunit protein bL25 (212 aa).

This sequence belongs to the bacterial ribosomal protein bL25 family. CTC subfamily. In terms of assembly, part of the 50S ribosomal subunit; part of the 5S rRNA/L5/L18/L25 subcomplex. Contacts the 5S rRNA. Binds to the 5S rRNA independently of L5 and L18.

This is one of the proteins that binds to the 5S RNA in the ribosome where it forms part of the central protuberance. The chain is Large ribosomal subunit protein bL25 from Leptospira interrogans serogroup Icterohaemorrhagiae serovar copenhageni (strain Fiocruz L1-130).